The sequence spans 1657 residues: Alsin (1657 aa).

RCC1 repeat units lie at residues 60 to 109 (GEVY…VTDN), 110 to 168 (GVAY…LSIS), and 169 to 219 (REIW…LVQC). The segment at 432 to 481 (TGAQAGSSAIGPEGLKDSREEQVKQESMQGKKSSSLVDIREEETEGGSRR) is disordered. The segment covering 445–455 (GLKDSREEQVK) has biased composition (basic and acidic residues). The span at 456–467 (QESMQGKKSSSL) shows a compositional bias: polar residues. Ser465, Ser466, Ser483, and Ser492 each carry phosphoserine. The residue at position 510 (Thr510) is a Phosphothreonine. RCC1 repeat units lie at residues 526-577 (TEVW…LTAK) and 578-628 (SQVY…LVDT). Position 533 is an N6-acetyllysine (Lys533). The DH domain maps to 690–885 (GYIASLHELA…ECLALHLGRK (196 aa)). The region spanning 901–1007 (GKMTDSLRKP…RAISQAVDQA (107 aa)) is the PH domain. 8 MORN repeats span residues 1049–1071 (YDGR…DGKM), 1072–1094 (YSGM…NKAM), 1100–1122 (YVGH…SGEV), 1123–1145 (FEGC…KLTS), 1151–1173 (FIGQ…TRGE), 1175–1197 (YMGM…FGLY), 1198–1220 (YEGN…DDTI), and 1221–1244 (YEGE…NGDY). Ser1335 is subject to Phosphoserine. The VPS9 domain occupies 1513–1657 (KQPDIALLGF…YYQIQREKLN (145 aa)).

In terms of assembly, forms a heteromeric complex with ALS2CL. Interacts with ALS2CL.

Functionally, may act as a GTPase regulator. Controls survival and growth of spinal motoneurons. This Pan troglodytes (Chimpanzee) protein is Alsin (ALS2).